The primary structure comprises 389 residues: UDP-D-apiose/UDP-D-xylose synthase 2 (389 aa).

F28, I29, D49, N76, I77, and L96 together coordinate NAD(+). UDP-alpha-D-glucuronate is bound by residues Y105, T139, E141, R182, and Y185. NAD(+)-binding residues include Y185 and K189. The active-site Proton acceptor is the Y185. N214 serves as a coordination point for UDP-alpha-D-glucuronate. W215 and R235 together coordinate NAD(+). K251, V253, R260, Y331, Y335, D337, and R341 together coordinate UDP-alpha-D-glucuronate.

It belongs to the NAD(P)-dependent epimerase/dehydratase family. As to quaternary structure, homodimer and heterodimer with AXS1. NAD(+) serves as cofactor. Widely expressed with stronger expression in dark-grown seedlings, leaves and stems, and lower levels in flowers, siliques, pistils, pollen and roots.

Its subcellular location is the cytoplasm. It carries out the reaction UDP-alpha-D-glucuronate + H(+) = UDP-alpha-D-xylose + CO2. It catalyses the reaction UDP-alpha-D-glucuronate + H(+) = UDP-alpha-D-apiose + CO2. Functionally, together with AXS1, catalyzes the conversion of UDP-D-glucuronate into a mixture of UDP-D-apiose (UDP-Api) as the main product and UDP-D-xylose to a lesser extent, via a cycle of oxidation and reduction. D-Apiose (3-C-hydroxymethyl-d-erythrose) is the only plant cell wall monosaccharide with a branched carbon skeleton and is found in rhamnogalacturonan II (RG-II), apiogalacturonan, and several apioglycosides. This chain is UDP-D-apiose/UDP-D-xylose synthase 2, found in Arabidopsis thaliana (Mouse-ear cress).